A 229-amino-acid polypeptide reads, in one-letter code: Interleukin-27 subunit beta (229 aa).

The first 20 residues, 1 to 20 (MTPQLLLALVLWASCPPCSG), serve as a signal peptide directing secretion. 2 Fibronectin type-III domains span residues 24–130 (PPAA…IKPD) and 131–227 (PPEG…TMSL). N-linked (GlcNAc...) asparagine glycans are attached at residues Asn-55 and Asn-105.

Belongs to the type I cytokine receptor family. Type 3 subfamily. Heterodimer with IL27/IL27A; not disulfide-linked. This heterodimer is known as interleukin IL-27. Heterodimer with IL12A; not disulfide-linked. This heterodimer is known as interleukin IL-35. Interacts with SQSTM1.

It localises to the secreted. In terms of biological role, associates with IL27 to form the IL-27 interleukin, a heterodimeric cytokine which functions in innate immunity. IL-27 has pro- and anti-inflammatory properties, that can regulate T-helper cell development, suppress T-cell proliferation, stimulate cytotoxic T-cell activity, induce isotype switching in B-cells, and that has diverse effects on innate immune cells. Among its target cells are CD4 T-helper cells which can differentiate in type 1 effector cells (TH1), type 2 effector cells (TH2) and IL17 producing helper T-cells (TH17). It drives rapid clonal expansion of naive but not memory CD4 T-cells. It also strongly synergizes with IL-12 to trigger interferon-gamma/IFN-gamma production of naive CD4 T-cells, binds to the cytokine receptor WSX-1/TCCR. Another important role of IL-27 is its antitumor activity as well as its antiangiogenic activity with activation of production of antiangiogenic chemokines. The protein is Interleukin-27 subunit beta (EBI3) of Homo sapiens (Human).